The primary structure comprises 243 residues: Probable HTH-type transcriptional regulator GfsR (243 aa).

Residues 154 to 179 are disordered; it reads AAVARPDTSGSATGRTGDSSPSLALS. The segment covering 161–178 has biased composition (polar residues); sequence TSGSATGRTGDSSPSLAL. Positions 171 to 236 constitute an HTH luxR-type domain; that stretch reads DSSPSLALSP…QALLRWLGHP (66 aa). The segment at residues 195–214 is a DNA-binding region (H-T-H motif); that stretch reads VREIAVEMRLAEKTVRNYLS.

It functions in the pathway antibiotic biosynthesis. In terms of biological role, probable DNA-binding protein that contributes to the control of expression of the biosynthesis operon of the 16-membered macrolide antibiotics FD-891 and FD-892. Might be a member of a two-component regulatory system; the putative sensor kinase gene is unknown. The polypeptide is Probable HTH-type transcriptional regulator GfsR (Streptomyces halstedii).